Consider the following 415-residue polypeptide: Homoserine O-succinyltransferase (415 aa).

Polar residues predominate over residues 1-26; that stretch reads MTSPALTAASVTPSRNTTSPDTTSHR. The tract at residues 1–27 is disordered; the sequence is MTSPALTAASVTPSRNTTSPDTTSHRP. Residues 71–386 form the AB hydrolase-1 domain; the sequence is NAVLICHALN…HGHDAFLLED (316 aa). Ser-177 acts as the Nucleophile in catalysis. Arg-247 provides a ligand contact to substrate. Active-site residues include Asp-346 and His-379. Residue Asp-380 participates in substrate binding.

It belongs to the AB hydrolase superfamily. MetX family. In terms of assembly, homodimer.

The protein resides in the cytoplasm. The catalysed reaction is L-homoserine + succinyl-CoA = O-succinyl-L-homoserine + CoA. It functions in the pathway amino-acid biosynthesis; L-methionine biosynthesis via de novo pathway; O-succinyl-L-homoserine from L-homoserine: step 1/1. Its function is as follows. Transfers a succinyl group from succinyl-CoA to L-homoserine, forming succinyl-L-homoserine. This Bordetella avium (strain 197N) protein is Homoserine O-succinyltransferase.